A 324-amino-acid polypeptide reads, in one-letter code: Elongation factor P--(R)-beta-lysine ligase (324 aa).

Substrate is bound at residue 75 to 77 (SPE). Residues 99–101 (RNQ) and asparagine 108 contribute to the ATP site. Tyrosine 117 is a substrate binding site. ATP is bound at residue 243–244 (EL). Glutamate 250 contributes to the substrate binding site. Glycine 299 lines the ATP pocket.

Belongs to the class-II aminoacyl-tRNA synthetase family. EpmA subfamily. In terms of assembly, homodimer.

It carries out the reaction D-beta-lysine + L-lysyl-[protein] + ATP = N(6)-((3R)-3,6-diaminohexanoyl)-L-lysyl-[protein] + AMP + diphosphate + H(+). Its function is as follows. With EpmB is involved in the beta-lysylation step of the post-translational modification of translation elongation factor P (EF-P). Catalyzes the ATP-dependent activation of (R)-beta-lysine produced by EpmB, forming a lysyl-adenylate, from which the beta-lysyl moiety is then transferred to the epsilon-amino group of a conserved specific lysine residue in EF-P. This is Elongation factor P--(R)-beta-lysine ligase from Buchnera aphidicola subsp. Schizaphis graminum (strain Sg).